The primary structure comprises 94 residues: HssA/B-like protein 49 (94 aa).

Residues 1–20 are disordered; that stretch reads MTLFSSISSISNPMTSSKSS.

It belongs to the hssA/B family.

This is HssA/B-like protein 49 (hssl49) from Dictyostelium discoideum (Social amoeba).